An 890-amino-acid chain; its full sequence is Alanine--tRNA ligase (890 aa).

Positions 568, 572, 680, and 684 each coordinate Zn(2+).

Belongs to the class-II aminoacyl-tRNA synthetase family. It depends on Zn(2+) as a cofactor.

The protein localises to the cytoplasm. It catalyses the reaction tRNA(Ala) + L-alanine + ATP = L-alanyl-tRNA(Ala) + AMP + diphosphate. Functionally, catalyzes the attachment of alanine to tRNA(Ala) in a two-step reaction: alanine is first activated by ATP to form Ala-AMP and then transferred to the acceptor end of tRNA(Ala). Also edits incorrectly charged Ser-tRNA(Ala) and Gly-tRNA(Ala) via its editing domain. This chain is Alanine--tRNA ligase, found in Psychrobacter arcticus (strain DSM 17307 / VKM B-2377 / 273-4).